Consider the following 220-residue polypeptide: Deoxyribose-phosphate aldolase 1 (220 aa).

Asp89 functions as the Proton donor/acceptor in the catalytic mechanism. The active-site Schiff-base intermediate with acetaldehyde is Lys151. Lys180 functions as the Proton donor/acceptor in the catalytic mechanism.

Belongs to the DeoC/FbaB aldolase family. DeoC type 1 subfamily.

The protein localises to the cytoplasm. It catalyses the reaction 2-deoxy-D-ribose 5-phosphate = D-glyceraldehyde 3-phosphate + acetaldehyde. It functions in the pathway carbohydrate degradation; 2-deoxy-D-ribose 1-phosphate degradation; D-glyceraldehyde 3-phosphate and acetaldehyde from 2-deoxy-alpha-D-ribose 1-phosphate: step 2/2. In terms of biological role, catalyzes a reversible aldol reaction between acetaldehyde and D-glyceraldehyde 3-phosphate to generate 2-deoxy-D-ribose 5-phosphate. This Staphylococcus aureus (strain MSSA476) protein is Deoxyribose-phosphate aldolase 1.